We begin with the raw amino-acid sequence, 293 residues long: Formamidopyrimidine-DNA glycosylase (293 aa).

Residue proline 2 is the Schiff-base intermediate with DNA of the active site. Glutamate 3 serves as the catalytic Proton donor. The active-site Proton donor; for beta-elimination activity is lysine 58. The DNA site is built by histidine 104, arginine 123, and lysine 166. The FPG-type zinc-finger motif lies at 257-293 (QVYDREGEPCRTDGCEGVVKRFVQNGRSTFWCPKCQR). Arginine 283 acts as the Proton donor; for delta-elimination activity in catalysis.

Belongs to the FPG family. As to quaternary structure, monomer. Zn(2+) serves as cofactor.

It catalyses the reaction Hydrolysis of DNA containing ring-opened 7-methylguanine residues, releasing 2,6-diamino-4-hydroxy-5-(N-methyl)formamidopyrimidine.. The catalysed reaction is 2'-deoxyribonucleotide-(2'-deoxyribose 5'-phosphate)-2'-deoxyribonucleotide-DNA = a 3'-end 2'-deoxyribonucleotide-(2,3-dehydro-2,3-deoxyribose 5'-phosphate)-DNA + a 5'-end 5'-phospho-2'-deoxyribonucleoside-DNA + H(+). Involved in base excision repair of DNA damaged by oxidation or by mutagenic agents. Acts as a DNA glycosylase that recognizes and removes damaged bases. Has a preference for oxidized purines, such as 7,8-dihydro-8-oxoguanine (8-oxoG). Has AP (apurinic/apyrimidinic) lyase activity and introduces nicks in the DNA strand. Cleaves the DNA backbone by beta-delta elimination to generate a single-strand break at the site of the removed base with both 3'- and 5'-phosphates. This chain is Formamidopyrimidine-DNA glycosylase, found in Bradyrhizobium sp. (strain ORS 278).